Reading from the N-terminus, the 184-residue chain is Bacterial microcompartment shell protein PduT (184 aa).

BMC domains follow at residues 4–86 (AIGI…PAIS) and 96–182 (AVGI…RQMV). C38 contacts [4Fe-4S] cluster.

It belongs to the bacterial microcompartments protein family. As to quaternary structure, homotrimerizes to form a pseudohexamer with a large central pore, which is probably the binding site for the [4Fe-4S] center. Interacts with PduS. Originally suggested to be a homotetramer; this is incorrect. It depends on [4Fe-4S] cluster as a cofactor.

It localises to the bacterial microcompartment. The protein operates within polyol metabolism; 1,2-propanediol degradation. A minor shell protein of the bacterial microcompartment (BMC) dedicated to 1,2-propanediol (1,2-PD) degradation. Overexpression of this protein leads to cells with either deposits or having lamina-like structures in the cytoplasm. Not absolutely required to make artificial BMCs. May selectively transport specific metabolites. Functionally, expression of a cosmid containing the full 21-gene pdu operon in E.coli allows E.coli to grow on 1,2-propanediol (1,2-PD) with the appearance of bacterial microcompartments (BMC) in its cytoplasm. In terms of biological role, the 1,2-PD-specific bacterial microcompartment (BMC) concentrates low levels of 1,2-PD catabolic enzymes, concentrates volatile reaction intermediates thus enhancing pathway flux and keeps the level of toxic, mutagenic propionaldehyde low. This Citrobacter freundii protein is Bacterial microcompartment shell protein PduT.